A 405-amino-acid chain; its full sequence is Argininosuccinate synthase (405 aa).

11-19 (AYSGGLDTS) provides a ligand contact to ATP. An L-citrulline-binding site is contributed by tyrosine 90. Glycine 119 serves as a coordination point for ATP. L-aspartate contacts are provided by threonine 121, asparagine 125, and aspartate 126. Asparagine 125 contacts L-citrulline. 5 residues coordinate L-citrulline: arginine 129, serine 178, serine 187, glutamate 263, and tyrosine 275.

It belongs to the argininosuccinate synthase family. Type 1 subfamily. Homotetramer.

It localises to the cytoplasm. The enzyme catalyses L-citrulline + L-aspartate + ATP = 2-(N(omega)-L-arginino)succinate + AMP + diphosphate + H(+). Its pathway is amino-acid biosynthesis; L-arginine biosynthesis; L-arginine from L-ornithine and carbamoyl phosphate: step 2/3. This chain is Argininosuccinate synthase, found in Legionella pneumophila (strain Corby).